The primary structure comprises 890 residues: MSCPLAFTFSLPSIFPFPSQLLPFSRHKHPYLLRATPTSATEDVASAVSGAPSIFISQSRSPEWWIDLLRSKVRSNLLREAVLTYVDMIVLGIKPDNYAFPALLKAVADLQDMELGKQIHAHVYKFGYGVDSVTVANTLVNLYRKCGDFGAVYKVFDRISERNQVSWNSLISSLCSFEKWEMALEAFRCMLDENVEPSSFTLVSVVTACSNLPMPEGLMMGKQVHAYGLRKGELNSFIINTLVAMYGKLGKLASSKVLLGSFGGRDLVTWNTVLSSLCQNEQLLEALEYLREMVLEGVEPDEFTISSVLPACSHLEMLRTGKELHAYALKNGSLDENSFVGSALVDMYCNCKQVLSGRRVFDGMFDRKIGLWNAMIAGYSQNEHDKEALLLFIGMEESAGLLANSTTMAGVVPACVRSGAFSRKEAIHGFVVKRGLDRDRFVQNTLMDMYSRLGKIDIAMRIFGKMEDRDLVTWNTMITGYVFSEHHEDALLLLHKMQNLERKVSKGASRVSLKPNSITLMTILPSCAALSALAKGKEIHAYAIKNNLATDVAVGSALVDMYAKCGCLQMSRKVFDQIPQKNVITWNVIIMAYGMHGNGQEAIDLLRMMMVQGVKPNEVTFISVFAACSHSGMVDEGLRIFYVMKPDYGVEPSSDHYACVVDLLGRAGRIKEAYQLMNMMPRDFNKAGAWSSLLGASRIHNNLEIGEIAAQNLIQLEPNVASHYVLLANIYSSAGLWDKATEVRRNMKEQGVRKEPGCSWIEHGDEVHKFVAGDSSHPQSEKLSGYLETLWERMRKEGYVPDTSCVLHNVEEDEKEILLCGHSEKLAIAFGILNTSPGTIIRVAKNLRVCNDCHLATKFISKIVDREIILRDVRRFHRFKNGTCSCGDYW.

A chloroplast-targeting transit peptide spans 1–44; it reads MSCPLAFTFSLPSIFPFPSQLLPFSRHKHPYLLRATPTSATEDV. 18 PPR repeats span residues 61-95, 96-130, 132-162, 163-197, 198-231, 235-265, 266-300, 301-335, 337-371, 372-398, 404-438, 439-473, 474-504, 516-550, 551-581, 582-616, 617-652, and 653-683; these read SPEW…GIKP, DNYA…GYGV, SVTV…ISER, NQVS…NVEP, SSFT…GLRK, NSFI…FGGR, DLVT…GVEP, DEFT…GSLD, NSFV…KIGL, WNAM…MEES, NSTT…GLDR, DRFV…DLVT, WNTM…ERKV, NSIT…NLAT, DVAV…IPQK, NVIT…GVKP, NEVT…GVEP, and SSDH…MPRD. The segment at 689–764 is type E motif; sequence AWSSLLGASR…EPGCSWIEHG (76 aa). Residues 765–795 form a type E(+) motif region; the sequence is DEVHKFVAGDSSHPQSEKLSGYLETLWERMR. Positions 796–890 are type DYW motif; sequence KEGYVPDTSC…NGTCSCGDYW (95 aa).

This sequence belongs to the PPR family. PCMP-H subfamily.

Its subcellular location is the plastid. The protein resides in the chloroplast. In terms of biological role, involved in RNA editing events in chloroplasts. Required for the editing of a single site in ndhB and ndhF transcripts, which are two plastid-encoded subunits of the chloroplast NAD(P)H dehydrogenase (NDH) complex. Required for the editing of a single site in psbZ. Required for optimal activity of the NDH complex of the photosynthetic electron transport chain. The sequence is that of Pentatricopeptide repeat-containing protein At3g57430, chloroplastic (PCMP-H81) from Arabidopsis thaliana (Mouse-ear cress).